Consider the following 201-residue polypeptide: Homeobox protein goosecoid-2 (201 aa).

Disordered stretches follow at residues Met-1–Pro-55, Pro-95–Arg-124, and Arg-179–Cys-201. Over residues Pro-95–Ala-106 the composition is skewed to low complexity. Positions Thr-123 to Lys-182 form a DNA-binding region, homeobox.

The protein belongs to the paired homeobox family. Bicoid subfamily. In terms of tissue distribution, expressed in adult testis.

The protein localises to the nucleus. Functionally, may have a role in development. May regulate its own transcription. May bind the bicoid consensus sequence TAATCC. This Mus musculus (Mouse) protein is Homeobox protein goosecoid-2 (Gsc2).